A 241-amino-acid polypeptide reads, in one-letter code: Sugar fermentation stimulation protein homolog (241 aa).

Belongs to the SfsA family.

The sequence is that of Sugar fermentation stimulation protein homolog from Nostoc punctiforme (strain ATCC 29133 / PCC 73102).